A 165-amino-acid polypeptide reads, in one-letter code: Protein C2-DOMAIN ABA-RELATED 8 (165 aa).

Position 1 is an N-acetylmethionine (M1). In terms of domain architecture, C2 spans 1-106 (MENLVGLLRI…QGTDIQELTN (106 aa)). Ca(2+) is bound by residues R21, D22, D27, D73, K74, D75, and D81.

The protein belongs to the plant CAR protein family. In terms of assembly, binds to PYR/PYL/RCAR abscisic acid intracellular receptors in an ABA-independent manner, both at the plasma membrane and in the nucleus.

The protein resides in the cell membrane. It is found in the nucleus. In terms of biological role, stimulates the GTPase/ATPase activities of Obg-like ATPases. Mediates the transient calcium-dependent interaction of PYR/PYL/RCAR abscisic acid (ABA) receptors with the plasma membrane and thus regulates ABA sensitivity. This chain is Protein C2-DOMAIN ABA-RELATED 8, found in Arabidopsis thaliana (Mouse-ear cress).